The following is a 162-amino-acid chain: Phosphopantetheine adenylyltransferase (162 aa).

Substrate is bound at residue T10. ATP is bound by residues 10–11 (TF) and H18. Positions 42, 74, and 88 each coordinate substrate. Residues 89 to 91 (GLR), E99, and 124 to 130 (FSCISST) contribute to the ATP site.

This sequence belongs to the bacterial CoaD family. As to quaternary structure, homohexamer. Mg(2+) is required as a cofactor.

The protein resides in the cytoplasm. It catalyses the reaction (R)-4'-phosphopantetheine + ATP + H(+) = 3'-dephospho-CoA + diphosphate. It functions in the pathway cofactor biosynthesis; coenzyme A biosynthesis; CoA from (R)-pantothenate: step 4/5. In terms of biological role, reversibly transfers an adenylyl group from ATP to 4'-phosphopantetheine, yielding dephospho-CoA (dPCoA) and pyrophosphate. The polypeptide is Phosphopantetheine adenylyltransferase (Francisella tularensis subsp. mediasiatica (strain FSC147)).